The sequence spans 121 residues: Ragulator complex protein LAMTOR4 homolog (121 aa).

The disordered stretch occupies residues 91–121 (TQNGATTSSSSSTSYNDAAEGNNISSSTVLA). Over residues 112-121 (NNISSSTVLA) the composition is skewed to polar residues.

Belongs to the LAMTOR4 family. Part of the Ragulator complex.

It is found in the lysosome. Functionally, regulator of the TOR pathway, a signaling cascade that promotes cell growth in response to growth factors, energy levels, and amino acids. As part of the Ragulator complex, may activate the TOR signaling cascade in response to amino acids. This chain is Ragulator complex protein LAMTOR4 homolog, found in Drosophila pseudoobscura pseudoobscura (Fruit fly).